The primary structure comprises 415 residues: Gamma-glutamyl phosphate reductase (415 aa).

This sequence belongs to the gamma-glutamyl phosphate reductase family.

It is found in the cytoplasm. It carries out the reaction L-glutamate 5-semialdehyde + phosphate + NADP(+) = L-glutamyl 5-phosphate + NADPH + H(+). Its pathway is amino-acid biosynthesis; L-proline biosynthesis; L-glutamate 5-semialdehyde from L-glutamate: step 2/2. Its function is as follows. Catalyzes the NADPH-dependent reduction of L-glutamate 5-phosphate into L-glutamate 5-semialdehyde and phosphate. The product spontaneously undergoes cyclization to form 1-pyrroline-5-carboxylate. The protein is Gamma-glutamyl phosphate reductase of Lachnospira eligens (strain ATCC 27750 / DSM 3376 / VPI C15-48 / C15-B4) (Eubacterium eligens).